Consider the following 124-residue polypeptide: Protein MGF 110-8L (124 aa).

The N-terminal stretch at 1-16 is a signal peptide; the sequence is MKVLILVLLGVVILQA. N-linked (GlcNAc...) asparagine; by host glycosylation is present at N76.

Belongs to the asfivirus MGF 110 family.

Plays a role in virus cell tropism, and may be required for efficient virus replication in macrophages. The chain is Protein MGF 110-8L from African swine fever virus (isolate Pig/Kenya/KEN-50/1950) (ASFV).